We begin with the raw amino-acid sequence, 343 residues long: Arginine-hydroxylase NDUFAF5, mitochondrial (343 aa).

Residues 1 to 29 constitute a mitochondrion transit peptide; sequence MLRRVVLSRLYARLGGPAVSAGRGGRRGV. Positions 18–40 are disordered; sequence AVSAGRGGRRGVASSVPPSGSTS.

This sequence belongs to the methyltransferase superfamily. In terms of assembly, interacts with NDUFAF8, leading to stabilize NDUFAF5. Interacts with NDUFS7. Interacts with PYURF (via TRM112 domain); the interaction is direct and stabilizes NDUFAF5 protein.

Its subcellular location is the mitochondrion inner membrane. Arginine hydroxylase that mediates hydroxylation of 'Arg-111' of NDUFS7 and is involved in the assembly of mitochondrial NADH:ubiquinone oxidoreductase complex (complex I, MT-ND1) at early stages. May also have methyltransferase activity. The chain is Arginine-hydroxylase NDUFAF5, mitochondrial from Rattus norvegicus (Rat).